The primary structure comprises 318 residues: uncharacterized protein (318 aa).

This is an uncharacterized protein from Autographa californica nuclear polyhedrosis virus (AcMNPV).